The chain runs to 306 residues: Curved DNA-binding protein (306 aa).

The 65-residue stretch at 5 to 69 folds into the J domain; sequence DYYAIMGVKP…QRRAEYDQLW (65 aa).

It is found in the cytoplasm. It localises to the nucleoid. In terms of biological role, DNA-binding protein that preferentially recognizes a curved DNA sequence. It is probably a functional analog of DnaJ; displays overlapping activities with DnaJ, but functions under different conditions, probably acting as a molecular chaperone in an adaptive response to environmental stresses other than heat shock. Lacks autonomous chaperone activity; binds native substrates and targets them for recognition by DnaK. Its activity is inhibited by the binding of CbpM. This chain is Curved DNA-binding protein, found in Salmonella choleraesuis (strain SC-B67).